The following is a 221-amino-acid chain: RNA pyrophosphohydrolase (221 aa).

Residues 6 to 149 (GFRPNVGIVL…KRSVYALALT (144 aa)) form the Nudix hydrolase domain. A Nudix box motif is present at residues 38–59 (GGIDRGETPEQAMFRELHEEVG).

This sequence belongs to the Nudix hydrolase family. RppH subfamily. The cofactor is a divalent metal cation.

Its function is as follows. Accelerates the degradation of transcripts by removing pyrophosphate from the 5'-end of triphosphorylated RNA, leading to a more labile monophosphorylated state that can stimulate subsequent ribonuclease cleavage. The chain is RNA pyrophosphohydrolase from Verminephrobacter eiseniae (strain EF01-2).